Consider the following 290-residue polypeptide: Tegument protein VP22 (290 aa).

Positions 98 to 112 (STSHGRLSPTKTTPH) are enriched in polar residues. The interval 98–156 (STSHGRLSPTKTTPHPKSAGVTPPQRVPARPATRAAAPSATPTQPDCVAKQRTSPGVNS) is disordered. A compositionally biased stretch (low complexity) spans 118-142 (VTPPQRVPARPATRAAAPSATPTQP). The Nuclear localization signal signature appears at 146-149 (AKQR). The Nuclear export signal signature appears at 219-231 (LDRFLKAAAIRIL).

This sequence belongs to the alphaherpesvirinae VP22 tegument protein family. As to quaternary structure, interacts with gE (via C-terminus); this interaction is necessary for the recruitment of VP22 to the Golgi and its packaging into virions. Interacts with gM (via C-terminus). Interacts with VP16; this interaction allows the formation of a tripartite complex composed of VP16, VP22 and UL41/VHS. Interacts with the capsid-binding protein UL16. Interacts with host CGAS. In terms of processing, highly phosphorylated in the host cell. Packaging is selective for underphosphorylated forms.

Its subcellular location is the virion tegument. It is found in the host cytoplasm. It localises to the host nucleus. The protein localises to the host Golgi apparatus. Its function is as follows. Tegument protein that plays different roles during the time course of infection. Participates in both the accumulation of viral mRNAs and viral protein translation at late time of infection. Modulates the RNase activity of the virion host shutoff protein UL41 probably to ensure necessary levels of key cellular mRNAs and proteins. Plays a role in microtubule reorganization that occurs after viral infection by stabilizing microtubule network. Plays a role in the inhibition of host innate immune system by targeting the CGAS enzymatic activity which is the principal cytosolic DNA sensor that detects invading viral DNA. Acts by mediating disruption of liquid-like droplets in which CGAS is activated, thereby preventing CGAS activity. The protein is Tegument protein VP22 (11) of Equus caballus (Horse).